The primary structure comprises 349 residues: Alanine racemase (349 aa).

The Proton acceptor; specific for D-alanine role is filled by Lys35. Lys35 is modified (N6-(pyridoxal phosphate)lysine). Substrate is bound at residue Arg130. The Proton acceptor; specific for L-alanine role is filled by Tyr244. Met292 is a binding site for substrate.

The protein belongs to the alanine racemase family. The cofactor is pyridoxal 5'-phosphate.

The catalysed reaction is L-alanine = D-alanine. It functions in the pathway amino-acid biosynthesis; D-alanine biosynthesis; D-alanine from L-alanine: step 1/1. Functionally, catalyzes the interconversion of L-alanine and D-alanine. May also act on other amino acids. This Dinoroseobacter shibae (strain DSM 16493 / NCIMB 14021 / DFL 12) protein is Alanine racemase (alr).